Reading from the N-terminus, the 598-residue chain is Thiol:disulfide interchange protein DsbD (598 aa).

A signal peptide spans 1 to 19 (MAYRIITLILLLCSTSATA). A disulfide bridge connects residues C122 and C128. The disordered stretch occupies residues 147–187 (DGQATAIEPMPSTSSRPAFNPPLPVEPRPAPELATSPAPAA). Residues 165–176 (FNPPLPVEPRPA) show a composition bias toward pro residues. 7 consecutive transmembrane segments (helical) span residues 197–217 (LPFT…TPCV), 242–262 (LLAF…GLVV), 277–297 (YVLV…FGLF), 330–350 (IAGL…LLYI), 356–376 (LWLG…PLIL), 391–411 (WMSH…VFLL), and 423–443 (LWSM…LGAT). Residues C216 and C338 are joined by a disulfide bond. The Thioredoxin domain maps to 459 to 598 (LVSARPLQDW…FSAHLRDWQA (140 aa)). C513 and C516 are oxidised to a cystine.

Belongs to the thioredoxin family. DsbD subfamily.

Its subcellular location is the cell inner membrane. It carries out the reaction [protein]-dithiol + NAD(+) = [protein]-disulfide + NADH + H(+). The enzyme catalyses [protein]-dithiol + NADP(+) = [protein]-disulfide + NADPH + H(+). Required to facilitate the formation of correct disulfide bonds in some periplasmic proteins and for the assembly of the periplasmic c-type cytochromes. Acts by transferring electrons from cytoplasmic thioredoxin to the periplasm. This transfer involves a cascade of disulfide bond formation and reduction steps. The chain is Thiol:disulfide interchange protein DsbD from Klebsiella pneumoniae subsp. pneumoniae (strain ATCC 700721 / MGH 78578).